A 784-amino-acid polypeptide reads, in one-letter code: Cadherin-15 (784 aa).

Positions 1–21 (MGSALLLALGLLAQSLGLSWA) are cleaved as a signal peptide. Residues 22–59 (VPEPKPSTLYPWRRASAPGRVRRAWVIPPISVSENHKR) constitute a propeptide that is removed on maturation. Cadherin domains follow at residues 60–151 (LPYP…RPAF), 152–259 (LQDV…APEF), 260–374 (TKDE…APVF), 375–480 (PENP…DHAP), and 481–589 (ALAL…TCLP). Topologically, residues 60 to 605 (LPYPLVQIKS…GGGVGVSLGA (546 aa)) are extracellular. N-linked (GlcNAc...) asparagine glycosylation is found at asparagine 106 and asparagine 226. 3 N-linked (GlcNAc...) asparagine glycosylation sites follow: asparagine 530, asparagine 537, and asparagine 575. The helical transmembrane segment at 606-625 (LVIVLASTVVLLVLILLAAL) threads the bilayer. At 626 to 784 (RTRFRGHSRG…ARLADMYGHQ (159 aa)) the chain is on the cytoplasmic side. Residues 676 to 700 (EPRATSRSLGRPPLRRDAPFSYVPQ) are disordered.

As to expression, skeletal muscle.

The protein localises to the cell membrane. Its function is as follows. Cadherins are calcium-dependent cell adhesion proteins. They preferentially interact with themselves in a homophilic manner in connecting cells; cadherins may thus contribute to the sorting of heterogeneous cell types. M-cadherin is part of the myogenic program and may provide a trigger for terminal muscle differentiation. This is Cadherin-15 (Cdh15) from Mus musculus (Mouse).